The following is a 447-amino-acid chain: Tubulin beta-4 chain (447 aa).

Residues Gln-11, Glu-71, Ser-140, Gly-144, Thr-145, Gly-146, Asn-206, and Asn-228 each contribute to the GTP site. Position 71 (Glu-71) interacts with Mg(2+). Residues 428–447 form a disordered region; the sequence is QDATAEEYEEEEHDGEEEHA. Residues 431 to 447 show a composition bias toward acidic residues; the sequence is TAEEYEEEEHDGEEEHA.

It belongs to the tubulin family. In terms of assembly, dimer of alpha and beta chains. A typical microtubule is a hollow water-filled tube with an outer diameter of 25 nm and an inner diameter of 15 nM. Alpha-beta heterodimers associate head-to-tail to form protofilaments running lengthwise along the microtubule wall with the beta-tubulin subunit facing the microtubule plus end conferring a structural polarity. Microtubules usually have 13 protofilaments but different protofilament numbers can be found in some organisms and specialized cells. Mg(2+) is required as a cofactor.

The protein resides in the cytoplasm. It is found in the cytoskeleton. In terms of biological role, tubulin is the major constituent of microtubules, a cylinder consisting of laterally associated linear protofilaments composed of alpha- and beta-tubulin heterodimers. Microtubules grow by the addition of GTP-tubulin dimers to the microtubule end, where a stabilizing cap forms. Below the cap, tubulin dimers are in GDP-bound state, owing to GTPase activity of alpha-tubulin. This chain is Tubulin beta-4 chain (TUBB4), found in Zea mays (Maize).